A 421-amino-acid polypeptide reads, in one-letter code: 3-alpha-mycarosylerythronolide B desosaminyl transferase (421 aa).

An N-terminal signal peptide occupies residues 1-23; it reads MRVVFSSMASKSHLFGLVPLAWA.

It belongs to the glycosyltransferase 28 family. In terms of assembly, heterotetramer composed of EryCII and EryCIII.

It carries out the reaction 3-O-alpha-L-mycarosylerythronolide B + dTDP-alpha-D-desosamine = erythromycin D + dTDP + H(+). Its pathway is antibiotic biosynthesis; erythromycin biosynthesis. In terms of biological role, catalyzes the conversion of alpha-L-mycarosylerythronolide B into erythromycin D in the erythromycin biosynthesis pathway. The chain is 3-alpha-mycarosylerythronolide B desosaminyl transferase (eryCIII) from Saccharopolyspora erythraea (strain ATCC 11635 / DSM 40517 / JCM 4748 / NBRC 13426 / NCIMB 8594 / NRRL 2338).